The primary structure comprises 306 residues: Tryptophan 2,3-dioxygenase (306 aa).

Positions Met1–Ala33 are disordered. Residues Phe75–His79, Tyr137, and Arg141 each bind substrate. His264 serves as a coordination point for heme. Thr278 provides a ligand contact to substrate.

This sequence belongs to the tryptophan 2,3-dioxygenase family. Homotetramer. The cofactor is heme.

The enzyme catalyses L-tryptophan + O2 = N-formyl-L-kynurenine. Its pathway is amino-acid degradation; L-tryptophan degradation via kynurenine pathway; L-kynurenine from L-tryptophan: step 1/2. Its function is as follows. Heme-dependent dioxygenase that catalyzes the oxidative cleavage of the L-tryptophan (L-Trp) pyrrole ring and converts L-tryptophan to N-formyl-L-kynurenine. Catalyzes the oxidative cleavage of the indole moiety. The sequence is that of Tryptophan 2,3-dioxygenase from Burkholderia pseudomallei (strain 668).